The primary structure comprises 305 residues: Probable G-protein coupled receptor 141 (305 aa).

Over 1-22 (MPGHNTSRNSSCDPIVTPHLIS) the chain is Extracellular. N-linked (GlcNAc...) asparagine glycosylation is found at Asn5 and Asn9. The chain crosses the membrane as a helical span at residues 23-43 (LYFIVLIGGLVGVISILFLLV). Over 44–50 (KMNTRSV) the chain is Cytoplasmic. A helical membrane pass occupies residues 51 to 71 (TTMAVINLVVVHSVFLLTVPF). Topologically, residues 72-89 (RLTYLIKKTWMFGLPFCK) are extracellular. A helical membrane pass occupies residues 90–110 (FVSAMLHIHMYLTFLFYVVIL). The Cytoplasmic portion of the chain corresponds to 111 to 131 (VTRYLIFFKCKDKVEFYRKLH). A helical transmembrane segment spans residues 132–152 (AVAASAGMWTLVIVIVVPLVV). Topologically, residues 153 to 183 (SRYGIHEEYNEEHCFKFHKELAYTYVKIINY) are extracellular. Residues 184–204 (MIVIFVIAVAVILLVFQVFII) traverse the membrane as a helical segment. Topologically, residues 205 to 227 (MLMVQKLRHSLLSHQEFWAQLKN) are cytoplasmic. A helical transmembrane segment spans residues 228–248 (LFFIGVILVCFLPYQFFRIYY). Over 249-267 (LNVVTHSNACNSKVAFYNE) the chain is Extracellular. The helical transmembrane segment at 268–288 (IFLSVTAISCYDLLLFVFGGS) threads the bilayer. Over 289 to 305 (HWFKQKIIGLWNCVLCR) the chain is Cytoplasmic.

Belongs to the G-protein coupled receptor 1 family.

Its subcellular location is the cell membrane. Orphan receptor. This Homo sapiens (Human) protein is Probable G-protein coupled receptor 141 (GPR141).